We begin with the raw amino-acid sequence, 1793 residues long: Chitin synthase 5 (1793 aa).

The tract at residues 1–28 is disordered; it reads MTNPRMSMYSLASEAPGGNRGTGQQSTQ. N-linked (GlcNAc...) asparagine glycosylation is found at Asn-70, Asn-164, Asn-638, Asn-664, and Asn-669. Helical transmembrane passes span 750-770 and 786-806; these read VWVF…LRYV and LVLC…IVAF. The Cytochrome b5 heme-binding domain occupies 815 to 877; the sequence is DKAYSQKEVD…GMNLDDYFVA (63 aa). Asn-897, Asn-1019, and Asn-1023 each carry an N-linked (GlcNAc...) asparagine glycan. Residues 1056 to 1076 traverse the membrane as a helical segment; the sequence is LLLAFSIMLCAVILLKFVSAL. Asn-1421 is a glycosylation site (N-linked (GlcNAc...) asparagine). A run of 3 helical transmembrane segments spans residues 1452 to 1472, 1479 to 1499, and 1507 to 1527; these read LFGT…IYLV, FPLI…LIFI, and IGWM…LPIY. Asn-1534 and Asn-1705 each carry an N-linked (GlcNAc...) asparagine glycan. The region spanning 1735–1791 is the DEK-C domain; it reads GPDDGMIVEAIRTVLMEVDLDTVTKKQVRALVEQRLQSELVGERRTFMDRQIDHELA.

The protein belongs to the chitin synthase family. Class V subfamily.

The protein resides in the cell membrane. The catalysed reaction is [(1-&gt;4)-N-acetyl-beta-D-glucosaminyl](n) + UDP-N-acetyl-alpha-D-glucosamine = [(1-&gt;4)-N-acetyl-beta-D-glucosaminyl](n+1) + UDP + H(+). Functionally, polymerizes chitin, a structural polymer of the cell wall and septum, by transferring the sugar moiety of UDP-GlcNAc to the non-reducing end of the growing chitin polymer. Regulates Germination and Tolerance to Hyperosmotic Stress. Plays a key role in pathogenicity. Likely contributes to post-penetration virulence. This is Chitin synthase 5 from Verticillium dahliae (strain VdLs.17 / ATCC MYA-4575 / FGSC 10137) (Verticillium wilt).